The chain runs to 747 residues: MSLIMRVLNGNLSLRLSAMKTVCQLQCGYSSHAKYAEHKSIERIRNIGISAHIDSGKTTLTERILFYTGRIAEMHEVRGKDNVGATMDSMELERQRGITIQSAATYTMWKDTNINIIDTPGHVDFTVEVERALRVLDGAVLVLCAVGGVQSQTLTVNRQMKRYNVPCLAFINKLDRLGSNPNRVLSQLRSKMNHNAAFIQLPIGVESHCKGLVDLVQERAVYFEGENGADLRLDEIPQEMRVESQERRQELIEHLSNADETFGELFLEEKPFTEADIKAALRRTCIKRTFTPVLVGTALKNKGVQPLLDAIIDYLPNPGEVENLAYIEHEGKEKQQIVLNPARDGKDPFMGLAFKLEAGRFGQLTYLRCYQGVLRKGDNIFNARTNKKVRIARLVRLHSNQMEDVNEVFAGDIFALFGVDCASGDTFTTNPKNNMAMESIFVPEPVVSMAIKPNNTKDRDNFSKAIARFTKEDPTFHFYFDNDVKETLVSGMGELHLEIYAQRMEREYGCPVTLGKPKVAFRETLVGPCEFDFLHKKQSGGSGQYARIIGLMEPLPPNQNTLLEFVDETVGTNVPKQFVPGVEKGYREMCERGMLSGHKLSGIRFRLQDGGHHIVDSSELAFMLAAHGAIKEVFQNGSWQILEPIMLVEVTAPEEFQGAVMGHLSKRHGIITGTEGTEGWFTVYAEVPLNDMFGYASELRSSTQGKGEFTMEYSRYSPCLPDVQDQIVRQYQESQGMGQAEKKKKKN.

The N-terminal 16 residues, 1–16 (MSLIMRVLNGNLSLRL), are a transit peptide targeting the mitochondrion. The tr-type G domain maps to 42-319 (ERIRNIGISA…AIIDYLPNPG (278 aa)). GTP-binding positions include 51 to 58 (AHIDSGKT), 118 to 122 (DTPGH), and 172 to 175 (NKLD).

It belongs to the TRAFAC class translation factor GTPase superfamily. Classic translation factor GTPase family. EF-G/EF-2 subfamily.

It localises to the mitochondrion. Its pathway is protein biosynthesis; polypeptide chain elongation. Functionally, mitochondrial GTPase that catalyzes the GTP-dependent ribosomal translocation step during translation elongation. During this step, the ribosome changes from the pre-translocational (PRE) to the post-translocational (POST) state as the newly formed A-site-bound peptidyl-tRNA and P-site-bound deacylated tRNA move to the P and E sites, respectively. Catalyzes the coordinated movement of the two tRNA molecules, the mRNA and conformational changes in the ribosome. Essential during development as it acts as a retrograde signal from mitochondria to the nucleus to slow down cell proliferation if mitochondrial energy output is low. The chain is Elongation factor G, mitochondrial from Drosophila grimshawi (Hawaiian fruit fly).